A 198-amino-acid polypeptide reads, in one-letter code: RxLR effector protein Htp1 (198 aa).

A signal peptide spans 1-23 (MRIHHPLTLAALCVVLHESLGAA). The short motif at 46 to 49 (RHLR) is the RxLR element. Disordered stretches follow at residues 48–101 (LRSD…TPMK) and 115–198 (TKNA…PTFD). An N-linked (GlcNAc...) asparagine glycan is attached at Asn-70. The segment covering 70-91 (NNSQEQATTGNSVETNQVPSTE) has biased composition (polar residues). Over residues 126–137 (DDDDSDFSDDDV) the composition is skewed to acidic residues. Residues 173 to 191 (APTNAPTGTDAPTDAPTDA) show a composition bias toward low complexity.

This sequence belongs to the RxLR effector family. Interacts with the effector Htp3 within the host cells.

It localises to the secreted. It is found in the host cell. In terms of biological role, effector involved in the disease saprolegniosis in salmonids and other freshwater fish, resulting in considerable economic losses in aquaculture. Within the host fish cells, Htp1 is involved in the uptake of the S.parasitica effector Htp3 at a neutral pH (pH 7.5) and its release from vesicles into host cytosol where it degrades nucleic acids. The polypeptide is RxLR effector protein Htp1 (Saprolegnia parasitica (strain CBS 223.65)).